The primary structure comprises 366 residues: Ribosomal RNA large subunit methyltransferase M (366 aa).

Residues serine 188, 221–224 (CPGG), aspartate 240, aspartate 260, and aspartate 277 each bind S-adenosyl-L-methionine. Lysine 306 serves as the catalytic Proton acceptor.

The protein belongs to the class I-like SAM-binding methyltransferase superfamily. RNA methyltransferase RlmE family. RlmM subfamily. As to quaternary structure, monomer.

Its subcellular location is the cytoplasm. It carries out the reaction cytidine(2498) in 23S rRNA + S-adenosyl-L-methionine = 2'-O-methylcytidine(2498) in 23S rRNA + S-adenosyl-L-homocysteine + H(+). Catalyzes the 2'-O-methylation at nucleotide C2498 in 23S rRNA. This chain is Ribosomal RNA large subunit methyltransferase M, found in Klebsiella pneumoniae (strain 342).